The sequence spans 321 residues: Beta-ketoacyl-[acyl-carrier-protein] synthase III (321 aa).

Residues Cys116 and His248 contribute to the active site. The segment at 249–253 (QANLR) is ACP-binding. Residue Asn278 is part of the active site.

This sequence belongs to the thiolase-like superfamily. FabH family. As to quaternary structure, homodimer.

The protein resides in the cytoplasm. It catalyses the reaction malonyl-[ACP] + acetyl-CoA + H(+) = 3-oxobutanoyl-[ACP] + CO2 + CoA. Its pathway is lipid metabolism; fatty acid biosynthesis. Catalyzes the condensation reaction of fatty acid synthesis by the addition to an acyl acceptor of two carbons from malonyl-ACP. Catalyzes the first condensation reaction which initiates fatty acid synthesis and may therefore play a role in governing the total rate of fatty acid production. Possesses both acetoacetyl-ACP synthase and acetyl transacylase activities. Its substrate specificity determines the biosynthesis of branched-chain and/or straight-chain of fatty acids. This is Beta-ketoacyl-[acyl-carrier-protein] synthase III from Yersinia enterocolitica serotype O:8 / biotype 1B (strain NCTC 13174 / 8081).